The primary structure comprises 507 residues: Serine hydroxymethyltransferase (507 aa).

The residue at position 283 (Lys-283) is an N6-(pyridoxal phosphate)lysine.

The protein belongs to the SHMT family. Homotetramer. Pyridoxal 5'-phosphate serves as cofactor.

It catalyses the reaction (6R)-5,10-methylene-5,6,7,8-tetrahydrofolate + glycine + H2O = (6S)-5,6,7,8-tetrahydrofolate + L-serine. Its pathway is one-carbon metabolism; tetrahydrofolate interconversion. Functionally, interconversion of serine and glycine. This is Serine hydroxymethyltransferase (mel-32) from Caenorhabditis elegans.